The primary structure comprises 322 residues: Nodulation protein D 1 (322 aa).

Residues 6–63 form the HTH lysR-type domain; the sequence is LDLNLLVALDALMTERKLTAAARSINLSQPAMSAAITRLRTYFRDELFTMNGRELVPT. Residues 23 to 42 constitute a DNA-binding region (H-T-H motif); it reads LTAAARSINLSQPAMSAAIT.

This sequence belongs to the LysR transcriptional regulatory family.

Regulates the expression of the nod abcFE genes which encode other nodulation proteins. NodD is also a negative regulator of its own expression. Binds flavonoids as inducers. The sequence is that of Nodulation protein D 1 (nodD1) from Sinorhizobium fredii (strain NBRC 101917 / NGR234).